A 332-amino-acid chain; its full sequence is Large ribosomal subunit protein uL29m (332 aa).

A disordered region spans residues 19–40; it reads RFTKPKPKPAKRENVRLPTQRT. A coiled-coil region spans residues 264–327; the sequence is TSENTESAIA…IQLQEEDAKN (64 aa).

Belongs to the universal ribosomal protein uL29 family. Component of the mitochondrial large ribosomal subunit. Mature mitochondrial ribosomes consist of a small (37S) and a large (54S) subunit. The 37S subunit contains at least 33 different proteins and 1 molecule of RNA (15S). The 54S subunit contains at least 45 different proteins and 1 molecule of RNA (21S).

The protein localises to the mitochondrion. The polypeptide is Large ribosomal subunit protein uL29m (MRPL4) (Kluyveromyces lactis (strain ATCC 8585 / CBS 2359 / DSM 70799 / NBRC 1267 / NRRL Y-1140 / WM37) (Yeast)).